The primary structure comprises 92 residues: RNA-binding protein Hfq (92 aa).

Residues 9 to 68 (DPFLNALRRERVPVSIYLVNGIKLQGQVESFDQFVILLKNTVSQMVYKHAISTVVPSRPF) enclose the Sm domain.

This sequence belongs to the Hfq family. As to quaternary structure, homohexamer.

Its function is as follows. RNA chaperone that binds small regulatory RNA (sRNAs) and mRNAs to facilitate mRNA translational regulation in response to envelope stress, environmental stress and changes in metabolite concentrations. Also binds with high specificity to tRNAs. This chain is RNA-binding protein Hfq, found in Shewanella piezotolerans (strain WP3 / JCM 13877).